The sequence spans 247 residues: tRNA pseudouridine synthase A (247 aa).

Asp52 acts as the Nucleophile in catalysis. Tyr113 provides a ligand contact to substrate.

Belongs to the tRNA pseudouridine synthase TruA family. As to quaternary structure, homodimer.

It carries out the reaction uridine(38/39/40) in tRNA = pseudouridine(38/39/40) in tRNA. Functionally, formation of pseudouridine at positions 38, 39 and 40 in the anticodon stem and loop of transfer RNAs. The chain is tRNA pseudouridine synthase A from Bartonella tribocorum (strain CIP 105476 / IBS 506).